We begin with the raw amino-acid sequence, 392 residues long: 8-amino-7-oxononanoate synthase (392 aa).

Arg-21 is a binding site for substrate. A pyridoxal 5'-phosphate-binding site is contributed by 108–109 (GF). His-133 provides a ligand contact to substrate. Residues Ser-181, 206–209 (DDAH), and 237–240 (TLSK) each bind pyridoxal 5'-phosphate. The residue at position 240 (Lys-240) is an N6-(pyridoxal phosphate)lysine. Residue Thr-354 participates in substrate binding.

It belongs to the class-II pyridoxal-phosphate-dependent aminotransferase family. BioF subfamily. Homodimer. Requires pyridoxal 5'-phosphate as cofactor.

The enzyme catalyses 6-carboxyhexanoyl-[ACP] + L-alanine + H(+) = (8S)-8-amino-7-oxononanoate + holo-[ACP] + CO2. It participates in cofactor biosynthesis; biotin biosynthesis. Its function is as follows. Catalyzes the decarboxylative condensation of pimeloyl-[acyl-carrier protein] and L-alanine to produce 8-amino-7-oxononanoate (AON), [acyl-carrier protein], and carbon dioxide. The sequence is that of 8-amino-7-oxononanoate synthase from Symbiobacterium thermophilum (strain DSM 24528 / JCM 14929 / IAM 14863 / T).